The following is a 77-amino-acid chain: Sec-independent protein translocase protein TatA (77 aa).

Residues 1-21 (MGSFSIWHWLIVLVIVMLVFG) form a helical membrane-spanning segment. A disordered region spans residues 40–77 (KDGMKEGNTDEPATPTPAKELRDSTTIDVEAKEKSRQQ). Residues 58–77 (KELRDSTTIDVEAKEKSRQQ) are compositionally biased toward basic and acidic residues.

The protein belongs to the TatA/E family. In terms of assembly, the Tat system comprises two distinct complexes: a TatABC complex, containing multiple copies of TatA, TatB and TatC subunits, and a separate TatA complex, containing only TatA subunits. Substrates initially bind to the TatABC complex, which probably triggers association of the separate TatA complex to form the active translocon.

The protein localises to the cell inner membrane. Functionally, part of the twin-arginine translocation (Tat) system that transports large folded proteins containing a characteristic twin-arginine motif in their signal peptide across membranes. TatA could form the protein-conducting channel of the Tat system. This chain is Sec-independent protein translocase protein TatA, found in Cupriavidus metallidurans (strain ATCC 43123 / DSM 2839 / NBRC 102507 / CH34) (Ralstonia metallidurans).